Reading from the N-terminus, the 328-residue chain is Ubiquitin-conjugating enzyme E2 Z (328 aa).

One can recognise a UBC core domain in the interval 71–225; that stretch reads QCILRIKRDI…IRHETMRVAV (155 aa). C160 functions as the Glycyl thioester intermediate in the catalytic mechanism. Residues 295-328 are disordered; the sequence is RLREKCPPEDNDGDSDSDTSSSGTDPDSQGSSQP. A compositionally biased stretch (low complexity) spans 312–328; it reads DTSSSGTDPDSQGSSQP.

The protein belongs to the ubiquitin-conjugating enzyme family.

Its subcellular location is the cytoplasm. The protein resides in the nucleus. It catalyses the reaction S-ubiquitinyl-[E1 ubiquitin-activating enzyme]-L-cysteine + [E2 ubiquitin-conjugating enzyme]-L-cysteine = [E1 ubiquitin-activating enzyme]-L-cysteine + S-ubiquitinyl-[E2 ubiquitin-conjugating enzyme]-L-cysteine.. It participates in protein modification; protein ubiquitination. Functionally, catalyzes the covalent attachment of ubiquitin to other proteins. May be involved in apoptosis regulation. In Danio rerio (Zebrafish), this protein is Ubiquitin-conjugating enzyme E2 Z (ube2z).